The chain runs to 367 residues: Ferrochelatase (367 aa).

2 residues coordinate Fe cation: His-226 and Glu-307.

This sequence belongs to the ferrochelatase family.

It is found in the cytoplasm. It catalyses the reaction heme b + 2 H(+) = protoporphyrin IX + Fe(2+). Its pathway is porphyrin-containing compound metabolism; protoheme biosynthesis; protoheme from protoporphyrin-IX: step 1/1. Catalyzes the ferrous insertion into protoporphyrin IX. This chain is Ferrochelatase, found in Burkholderia pseudomallei (strain 668).